Reading from the N-terminus, the 75-residue chain is Large ribosomal subunit protein uL30 (75 aa).

It belongs to the universal ribosomal protein uL30 family. Part of the 50S ribosomal subunit.

In Roseiflexus castenholzii (strain DSM 13941 / HLO8), this protein is Large ribosomal subunit protein uL30.